The following is a 535-amino-acid chain: Beta-amylase (535 aa).

The propeptide at 1–2 (ME) is removed in mature form. Residue valine 3 is modified to N-acetylvaline. Substrate-binding residues include aspartate 51, histidine 91, and aspartate 99. The active-site Proton donor is glutamate 184. The substrate site is built by lysine 293, histidine 298, and threonine 340. The active-site Proton acceptor is glutamate 378. Substrate is bound by residues 379-380 (NA) and arginine 418. A run of 3 repeats spans residues 489–499 (GPTGGMGGQAE), 500–510 (GPTCGMGGQVK), and 511–521 (GPTGGMGGQAE). The interval 489 to 532 (GPTGGMGGQAEGPTCGMGGQVKGPTGGMGGQAEDPTSGMGGELP) is 4 X 11 AA tandem repeats. Positions 490 to 535 (PTGGMGGQAEGPTCGMGGQVKGPTGGMGGQAEDPTSGMGGELPATM) are cleaved as a propeptide — removed in mature form. The interval 513–535 (TGGMGGQAEDPTSGMGGELPATM) is disordered. Residues 522-532 (DPTSGMGGELP) form a 4; approximate repeat.

Belongs to the glycosyl hydrolase 14 family. As to quaternary structure, monomer. In terms of tissue distribution, endosperm.

It catalyses the reaction Hydrolysis of (1-&gt;4)-alpha-D-glucosidic linkages in polysaccharides so as to remove successive maltose units from the non-reducing ends of the chains.. Catalyzes the liberation of maltose from 1,4-alpha-D glucans. In Hordeum vulgare subsp. spontaneum (Wild barley), this protein is Beta-amylase.